Consider the following 1179-residue polypeptide: ATP-dependent helicase/deoxyribonuclease subunit B (1179 aa).

It belongs to the helicase family. AddB/RexB type 2 subfamily. As to quaternary structure, heterodimer of AddA and RexB. It depends on Mg(2+) as a cofactor.

In terms of biological role, the heterodimer acts as both an ATP-dependent DNA helicase and an ATP-dependent, dual-direction single-stranded exonuclease. Recognizes the chi site generating a DNA molecule suitable for the initiation of homologous recombination. This subunit has 5' -&gt; 3' nuclease activity but not helicase activity. This Lactobacillus delbrueckii subsp. bulgaricus (strain ATCC 11842 / DSM 20081 / BCRC 10696 / JCM 1002 / NBRC 13953 / NCIMB 11778 / NCTC 12712 / WDCM 00102 / Lb 14) protein is ATP-dependent helicase/deoxyribonuclease subunit B.